The chain runs to 211 residues: Uracil phosphoribosyltransferase (211 aa).

5-phospho-alpha-D-ribose 1-diphosphate-binding positions include Arg-78, Arg-103, and 130–138 (DPMLATGNS). Residues Ile-193 and 198-200 (GDA) each bind uracil. Asp-199 contributes to the 5-phospho-alpha-D-ribose 1-diphosphate binding site.

This sequence belongs to the UPRTase family. Requires Mg(2+) as cofactor.

It carries out the reaction UMP + diphosphate = 5-phospho-alpha-D-ribose 1-diphosphate + uracil. Its pathway is pyrimidine metabolism; UMP biosynthesis via salvage pathway; UMP from uracil: step 1/1. With respect to regulation, allosterically activated by GTP. Catalyzes the conversion of uracil and 5-phospho-alpha-D-ribose 1-diphosphate (PRPP) to UMP and diphosphate. In Acinetobacter baumannii (strain AB307-0294), this protein is Uracil phosphoribosyltransferase.